The primary structure comprises 255 residues: 2-(S)-hydroxypropyl-CoM dehydrogenase 3 (255 aa).

Residues Ile-19, Asp-38, 64–65 (DV), and Asn-91 contribute to the NAD(+) site. Ser-143 and Tyr-156 together coordinate (S)-2-hydroxypropyl-coenzyme M. Residue Tyr-156 is the Proton acceptor of the active site. NAD(+) is bound at residue Lys-160. Thr-188 is a (S)-2-hydroxypropyl-coenzyme M binding site. 189-193 (VTSTG) is a binding site for NAD(+). A (S)-2-hydroxypropyl-coenzyme M-binding site is contributed by Tyr-215.

It belongs to the short-chain dehydrogenases/reductases (SDR) family. As to quaternary structure, homotetramer.

The enzyme catalyses (S)-2-hydroxypropyl-coenzyme M + NAD(+) = 2-oxopropyl-coenzyme M + NADH + H(+). With respect to regulation, not inhibited by 2-(2-methyl-2-hydroxypropylthio)ethanesulfonate (M-HPC), an achiral analog of both R-HPC and S-HPC. Its function is as follows. Involved in aliphatic epoxide carboxylation. Catalyzes the reversible oxidation of (2S)-2-hydroxypropyl-coenzyme M (S-HPC) to 2-oxopropyl-coenzyme M (2-KPC). The enzyme is highly specific for the S enantiomers. In vitro can also use the aliphatic ketone 2-butanone and the aliphatic alcohol 2-propanol, and shows an inherent stereoselectivity for 2-butanone reduction. This is 2-(S)-hydroxypropyl-CoM dehydrogenase 3 from Xanthobacter autotrophicus (strain ATCC BAA-1158 / Py2).